We begin with the raw amino-acid sequence, 578 residues long: MLCKFQVFNPIAIELSPHIGNQLLECRGYCKSPALFLKKICPSLKAVAKHPLIILKVYHDADDESRTLSRRQGLSIVRKLVAGFRKAGLKKGDCFAVTSFSDIMYSMVFLGGVAAGRVFSGTNPAYRVAEMRHHIRTTEVKFFIVEPELLDVVIEGATREGIPKDCIFVFNVRGQKVPYGFRSWEWLLQHGEEDWERITDLETLKRTDVARLTTSGTTGLPKTACQSHYNATSFHTVIATKSQASITWEPRTISPLPMFHVATVPAVHASPFRTGHPIWIMRRFKLEPFLAGIEKHQVTNLAVIPPLVTAIINSPLSKKYSLKSVRTAVSGVAPLDAGSQREMRKLLAPGVTFTQLWGLTETTGAMTLFPYPEEDDTGSVGRLIPNTDVKLVDEDGKDITAFDVRGEICVRGPTVVRQYYRNSKANAETWDEDGYLHTGDILYCDSKTKLWYIVDRKKELIKVRGFQVAPPELEAALLQAKDDIADVAVIGLKSQPDSDAERPRAYVVRKPGSDITEAGVKRLIDDHLASYKQLTGGVVFLDEIPRSPTGKILKRVLREWAGTEEKENVTTRRALIPL.

Position 211–222 (211–222) interacts with AMP; that stretch reads RLTTSGTTGLPK. The tract at residues 472-551 is AMP-binding; sequence ELEAALLQAK…DEIPRSPTGK (80 aa).

The protein belongs to the ATP-dependent AMP-binding enzyme family.

The protein operates within mycotoxin biosynthesis. Acyl-CoA synthetase; part of the gene clusters that mediate the biosynthesis of the host-selective toxins (HSTs) ACT-toxins responsible for brown spot of tangerine disease by the tangerine pathotype which affects tangerines and mandarins. ACT-toxins consist of three moieties, 9,10-epoxy-8-hydroxy-9-methyl-decatrienoic acid (EDA), valine and a polyketide. ACT-toxin I is toxic to both citrus and pear; toxin II the 5''-deoxy derivative of ACT-toxin I, is highly toxic to pear and slightly toxic to citrus. On cellular level, ACT-toxins affect plasma membrane of susceptible cells and cause a sudden increase in loss of K(+) after a few minutes of toxin treatment. The acyl-CoA ligase ACTT1, the hydrolase ACTT2, the enoyl-CoA hydratases ACTT3 and ACTT6, and the acyl-CoA synthetase ACTT5 are all involved in the biosynthesis of the AK-, AF- and ACT-toxin common 9,10-epoxy-8-hydroxy-9-methyl-decatrienoic acid (EDA) structural moiety. The exact role of each enzyme, and of additional enzymes identified within the AF-toxin clusters have still to be determined. On the other hand, ACTTS1 to ACTTS4 are specific to the tangerine pathotype. The function of ACTTS3 is to elongate the polyketide chain portion of ACT-toxin that is unique to this toxin. The enoyl-reductase ACTTS2 might complement the missing enoyl-reductase (ER) domain in ACTTS3 in the synthesis of the polyketide portion of ACT-toxin. The roles of the nonribosomal peptide synthetases-related proteins ACTTS1 and ACTTS4 have also still not been elucidated. This Alternaria alternata (Alternaria rot fungus) protein is Acyl-CoA synthetase ACTT5.